We begin with the raw amino-acid sequence, 543 residues long: CTP synthase (543 aa).

The amidoligase domain stretch occupies residues 1–270 (MNNLTSTKFI…DTQILKHFNI (270 aa)). Position 18 (S18) interacts with CTP. S18 contacts UTP. ATP contacts are provided by residues 19–24 (SLGKGL) and D76. Mg(2+) is bound by residues D76 and E144. Residues 151–153 (DIE), 191–196 (KTKPTQ), and K227 each bind CTP. UTP-binding positions include 191–196 (KTKPTQ) and K227. One can recognise a Glutamine amidotransferase type-1 domain in the interval 295 to 537 (TIAIIGKYIK…IQASLNYQET (243 aa)). G356 provides a ligand contact to L-glutamine. C383 serves as the catalytic Nucleophile; for glutamine hydrolysis. Residues 384-387 (MGMQ), E407, and R462 each bind L-glutamine. Residues H510 and E512 contribute to the active site.

This sequence belongs to the CTP synthase family. Homotetramer.

It catalyses the reaction UTP + L-glutamine + ATP + H2O = CTP + L-glutamate + ADP + phosphate + 2 H(+). The catalysed reaction is L-glutamine + H2O = L-glutamate + NH4(+). The enzyme catalyses UTP + NH4(+) + ATP = CTP + ADP + phosphate + 2 H(+). It functions in the pathway pyrimidine metabolism; CTP biosynthesis via de novo pathway; CTP from UDP: step 2/2. With respect to regulation, allosterically activated by GTP, when glutamine is the substrate; GTP has no effect on the reaction when ammonia is the substrate. The allosteric effector GTP functions by stabilizing the protein conformation that binds the tetrahedral intermediate(s) formed during glutamine hydrolysis. Inhibited by the product CTP, via allosteric rather than competitive inhibition. Functionally, catalyzes the ATP-dependent amination of UTP to CTP with either L-glutamine or ammonia as the source of nitrogen. Regulates intracellular CTP levels through interactions with the four ribonucleotide triphosphates. The sequence is that of CTP synthase from Ehrlichia ruminantium (strain Gardel).